The chain runs to 245 residues: Orotidine 5'-phosphate decarboxylase (245 aa).

Substrate-binding positions include Asp22, Lys44, Asp71–Thr80, Thr131, Arg192, Gln201, Gly221, and Arg222. Lys73 (proton donor) is an active-site residue.

This sequence belongs to the OMP decarboxylase family. Type 1 subfamily. As to quaternary structure, homodimer.

It catalyses the reaction orotidine 5'-phosphate + H(+) = UMP + CO2. The protein operates within pyrimidine metabolism; UMP biosynthesis via de novo pathway; UMP from orotate: step 2/2. Functionally, catalyzes the decarboxylation of orotidine 5'-monophosphate (OMP) to uridine 5'-monophosphate (UMP). The polypeptide is Orotidine 5'-phosphate decarboxylase (Escherichia coli O45:K1 (strain S88 / ExPEC)).